A 196-amino-acid polypeptide reads, in one-letter code: Large ribosomal subunit protein bL25 (196 aa).

Belongs to the bacterial ribosomal protein bL25 family. CTC subfamily. In terms of assembly, part of the 50S ribosomal subunit; part of the 5S rRNA/L5/L18/L25 subcomplex. Contacts the 5S rRNA. Binds to the 5S rRNA independently of L5 and L18.

Functionally, this is one of the proteins that binds to the 5S RNA in the ribosome where it forms part of the central protuberance. This Treponema pallidum subsp. pallidum (strain SS14) protein is Large ribosomal subunit protein bL25.